Reading from the N-terminus, the 180-residue chain is Bifunctional protein PyrR (180 aa).

The PRPP-binding signature appears at 101–113 (VILVDDVLYTGRT).

Belongs to the purine/pyrimidine phosphoribosyltransferase family. PyrR subfamily. Homodimer and homohexamer; in equilibrium.

It carries out the reaction UMP + diphosphate = 5-phospho-alpha-D-ribose 1-diphosphate + uracil. Its function is as follows. Regulates transcriptional attenuation of the pyrimidine nucleotide (pyr) operon by binding in a uridine-dependent manner to specific sites on pyr mRNA. This disrupts an antiterminator hairpin in the RNA and favors formation of a downstream transcription terminator, leading to a reduced expression of downstream genes. In terms of biological role, also displays a weak uracil phosphoribosyltransferase activity which is not physiologically significant. The polypeptide is Bifunctional protein PyrR (Bacillus thuringiensis subsp. konkukian (strain 97-27)).